We begin with the raw amino-acid sequence, 454 residues long: N-myc 2 proto-oncogene protein (454 aa).

3 disordered regions span residues 132 to 166, 230 to 269, and 325 to 374; these read SEKM…HSGT, VAAP…DEEE, and PSPY…VRRR. The span at 151–161 shows a compositional bias: low complexity; sequence PGAGAASPAGR. The span at 256–269 shows a compositional bias: acidic residues; sequence ALSDEVDEEEDEEE. The segment covering 363-374 has biased composition (basic and acidic residues); that stretch reads RKSDSEDSVRRR. The bHLH domain maps to 371–423; it reads VRRRNHNILERQRRNDLRSSFTTLRDHVPELVKNEKAAKVVILKKACEYVHYL. Positions 423–444 are leucine-zipper; it reads LQAKEHQLLMEKEKLQARQQQL.

Efficient DNA binding requires dimerization with another bHLH protein.

The protein resides in the nucleus. The sequence is that of N-myc 2 proto-oncogene protein (N-MYC2) from Marmota monax (Woodchuck).